Consider the following 218-residue polypeptide: Ribose-5-phosphate isomerase A (218 aa).

Residues 28 to 31, 81 to 84, and 94 to 97 contribute to the substrate site; these read TGST, DGAD, and KGGG. Catalysis depends on Glu-103, which acts as the Proton acceptor. Position 121 (Lys-121) interacts with substrate.

The protein belongs to the ribose 5-phosphate isomerase family. In terms of assembly, homodimer.

The enzyme catalyses aldehydo-D-ribose 5-phosphate = D-ribulose 5-phosphate. The protein operates within carbohydrate degradation; pentose phosphate pathway; D-ribose 5-phosphate from D-ribulose 5-phosphate (non-oxidative stage): step 1/1. In terms of biological role, catalyzes the reversible conversion of ribose-5-phosphate to ribulose 5-phosphate. This is Ribose-5-phosphate isomerase A from Shewanella woodyi (strain ATCC 51908 / MS32).